A 494-amino-acid polypeptide reads, in one-letter code: UPF0164 protein TP_0859/TP_0860 (494 aa).

An N-terminal signal peptide occupies residues Met1–Ala44.

Belongs to the UPF0164 family.

This is UPF0164 protein TP_0859/TP_0860 from Treponema pallidum (strain Nichols).